We begin with the raw amino-acid sequence, 157 residues long: Large ribosomal subunit protein mL59 (157 aa).

This sequence belongs to the mitochondrion-specific ribosomal protein mL59 family. As to quaternary structure, component of the mitochondrial large ribosomal subunit (mt-LSU). Mature yeast 74S mitochondrial ribosomes consist of a small (37S) and a large (54S) subunit. The 37S small subunit contains a 15S ribosomal RNA (15S mt-rRNA) and 34 different proteins. The 54S large subunit contains a 21S rRNA (21S mt-rRNA) and 46 different proteins.

The protein resides in the mitochondrion. Its function is as follows. Component of the mitochondrial ribosome (mitoribosome), a dedicated translation machinery responsible for the synthesis of mitochondrial genome-encoded proteins, including at least some of the essential transmembrane subunits of the mitochondrial respiratory chain. The mitoribosomes are attached to the mitochondrial inner membrane and translation products are cotranslationally integrated into the membrane. The polypeptide is Large ribosomal subunit protein mL59 (MRPL25) (Saccharomyces cerevisiae (strain ATCC 204508 / S288c) (Baker's yeast)).